Here is a 140-residue protein sequence, read N- to C-terminus: Lymphocyte antigen 6 complex locus protein G5c (140 aa).

Positions 1-41 (MRFMAGPAGSQNPGPMCFHSSLQALYTVLLIVLVMMSLVFG) are cleaved as a signal peptide. In terms of domain architecture, UPAR/Ly6 spans 60–140 (LRCYRCLLET…SQCCFLGFLQ (81 aa)). 4 disulfides stabilise this stretch: C62–C89, C65–C74, C81–C107, and C116–C133. Residue N96 is glycosylated (N-linked (GlcNAc...) asparagine).

As to quaternary structure, forms oligomers. In terms of processing, N-glycosylated.

It localises to the secreted. May have a role in hematopoietic cell differentiation. This Macaca mulatta (Rhesus macaque) protein is Lymphocyte antigen 6 complex locus protein G5c (LY6G5C).